The chain runs to 1960 residues: [F-actin]-monooxygenase MICAL3 (1960 aa).

The segment at 2 to 494 (EESKNEATNR…RHLYDTGDTK (493 aa)) is monooxygenase domain. FAD-binding positions include Cys-97, 116 to 118 (EKR), 123 to 125 (RNN), Phe-183, Tyr-298, and Asp-398. The 107-residue stretch at 518 to 624 (VARSSKLLGW…YLTQFYEMFK (107 aa)) folds into the Calponin-homology (CH) domain. Residue Ser-649 is modified to Phosphoserine. The disordered stretch occupies residues 658-704 (GQTISRKRSPKDKKEKDLDGAGKRRKTSQSEEEDTPRGHRGARPTLV). A compositionally biased stretch (basic and acidic residues) spans 669 to 679 (DKKEKDLDGAG). A phosphoserine mark is found at Ser-685 and Ser-687. The region spanning 762 to 824 (DTCYFCQKRV…KPHYCYRLSG (63 aa)) is the LIM zinc-binding domain. The Zn(2+) site is built by Cys-764, Cys-767, His-785, Cys-788, Cys-791, Cys-794, Cys-814, and His-817. 2 disordered regions span residues 826–887 (AQRK…LRGT) and 906–1295 (LEEV…EALK). Thr-887 is subject to Phosphothreonine. Residue Ser-971 is modified to Phosphoserine. Acidic residues predominate over residues 984–1014 (GEEEEEDEEDEEEEEEEEDEEDEEEDEDESS). Basic and acidic residues-rich tracts occupy residues 1039–1051 (HWTH…EERA) and 1072–1084 (DVDS…KGEA). Ser-1129, Ser-1139, Ser-1156, and Ser-1188 each carry phosphoserine. Pro residues-rich tracts occupy residues 1192 to 1203 (SPLPEPSTPPAE) and 1217 to 1233 (RTPP…PPTQ). Phosphoserine is present on Ser-1250. Thr-1252 carries the post-translational modification Phosphothreonine. Phosphoserine occurs at positions 1254, 1286, and 1313. The span at 1277–1286 (QGVTKDTLGS) shows a compositional bias: polar residues. Disordered stretches follow at residues 1316 to 1550 (LTPV…KRGL) and 1564 to 1782 (RMRA…EEEL). Thr-1317 carries the phosphothreonine modification. A compositionally biased stretch (basic and acidic residues) spans 1379–1393 (PDREPKGPREEHRDL). Low complexity predominate over residues 1394–1406 (SSSSGLGLQGSSS). Residue Ser-1404 is modified to Phosphoserine. The segment covering 1407 to 1425 (RTRTPGSQSFNTSDSTMLT) has biased composition (polar residues). Thr-1425 is subject to Phosphothreonine. The span at 1485 to 1503 (SVDEIPFADDVEDTYDDNT) shows a compositional bias: acidic residues. A compositionally biased stretch (low complexity) spans 1594 to 1611 (AAAAPRTPRTPAPRRATA). The span at 1616–1627 (GPEEPAPRHEAT) shows a compositional bias: basic and acidic residues. The span at 1633–1653 (SPPSDSGGPDGSVTSSEGSSG) shows a compositional bias: low complexity. A compositionally biased stretch (basic residues) spans 1654 to 1672 (KSKKRSSLFSPRRSKKEKK). Residues Ser-1660 and Ser-1663 each carry the phosphoserine modification. Residues 1718–1727 (CPSTPSSGTT) show a composition bias toward polar residues. Over residues 1762 to 1778 (VLERTSQKSRKEPRTYT) the composition is skewed to basic and acidic residues. The stretch at 1779–1952 (EEELNAKLTR…DKDLEAAMLS (174 aa)) forms a coiled coil. Residues 1799-1948 (KQEELKRLHR…EKEEDKDLEA (150 aa)) form the bMERB domain. Ser-1870 bears the Phosphoserine mark.

It belongs to the Mical family. Interacts with RAB1B, RAB8A, RAB10, RAB13 and RAB15 (in their GTP-bound forms); binding to RAB1B is of low affinity compared to other Rab proteins; at least in case of RAB8A can bind 2 molecules of RAB8A simultaneously through a high and a low affinity binding site, respectively. Interacts with ERC1 and RAB8A; may bridge ERC1 with RAB8A. Interacts with KIF23 and ERC1; enhances the interaction between KIF23 and ERC1. Interacts with NINL. The cofactor is FAD.

Its subcellular location is the cytoplasm. The protein resides in the cell cortex. It is found in the cytoskeleton. The protein localises to the nucleus. It localises to the midbody. Its subcellular location is the spindle. The protein resides in the cilium basal body. It carries out the reaction L-methionyl-[F-actin] + NADPH + O2 + H(+) = L-methionyl-(R)-S-oxide-[F-actin] + NADP(+) + H2O. Monooxygenase that promotes depolymerization of F-actin by mediating oxidation of specific methionine residues on actin to form methionine-sulfoxide, resulting in actin filament disassembly and preventing repolymerization. In the absence of actin, it also functions as a NADPH oxidase producing H(2)O(2). Seems to act as Rab effector protein and play a role in vesicle trafficking. Involved in exocytic vesicles tethering and fusion: the monooxygenase activity is required for this process and implicates RAB8A associated with exocytotic vesicles. Required for cytokinesis. Contributes to stabilization and/or maturation of the intercellular bridge independently of its monooxygenase activity. Promotes recruitment of Rab8 and ERC1 to the intercellular bridge, and together these proteins are proposed to function in timely abscission. In Bos taurus (Bovine), this protein is [F-actin]-monooxygenase MICAL3 (MICAL3).